Consider the following 469-residue polypeptide: Cyclin-dependent kinase 14 (469 aa).

A phosphoserine mark is found at serine 24, serine 78, and serine 95. The disordered stretch occupies residues 103–133; that stretch reads FKTSSTGKESPKVRRHSSPSSPTSPKFGKAD. Serine 134 bears the Phosphoserine mark. Residues 135–419 enclose the Protein kinase domain; the sequence is YEKLEKLGEG…AQAALSHEYF (285 aa). Residues 141-149 and lysine 164 each bind ATP; that span reads LGEGSYATV. Catalysis depends on aspartate 256, which acts as the Proton acceptor. A disordered region spans residues 449-469; sequence ESMRAFGKNNSYGKSLSNSKH. The segment covering 456 to 469 has biased composition (polar residues); sequence KNNSYGKSLSNSKH.

Belongs to the protein kinase superfamily. CMGC Ser/Thr protein kinase family. CDC2/CDKX subfamily. As to quaternary structure, found in a complex with LRP6, CCNY and CAPRIN2 during G2/M stage; CAPRIN2 functions as a scaffold for the complex by binding to CCNY via its N terminus and to CDK14 via its C terminus. Interacts with CCNY; CCNY mediates its recruitment to the plasma membrane and promotes phosphorylation of LRP6. Interacts with CCDN3 and CDKN1A. Interacts with SEPT8. Interacts with 14-3-3 proteina YWHAB, YWHAE, YWHAH and YWHAQ. As to expression, highly expressed in brain, pancreas, kidney, heart, testis and ovary. Also detected at lower levels in other tissues except in spleen and thymus where expression is barely detected.

The protein localises to the cell membrane. It localises to the cytoplasm. The protein resides in the nucleus. The enzyme catalyses L-seryl-[protein] + ATP = O-phospho-L-seryl-[protein] + ADP + H(+). It carries out the reaction L-threonyl-[protein] + ATP = O-phospho-L-threonyl-[protein] + ADP + H(+). Serine/threonine-protein kinase activity is promoted by associated cyclins CCDN3 and CCNY and repressed by CDKN1A. Its function is as follows. Serine/threonine-protein kinase involved in the control of the eukaryotic cell cycle, whose activity is controlled by an associated cyclin. Acts as a cell-cycle regulator of Wnt signaling pathway during G2/M phase by mediating the phosphorylation of LRP6 at 'Ser-1490', leading to the activation of the Wnt signaling pathway. Acts as a regulator of cell cycle progression and cell proliferation via its interaction with CCDN3. Phosphorylates RB1 in vitro, however the relevance of such result remains to be confirmed in vivo. May also play a role in meiosis, neuron differentiation and may indirectly act as a negative regulator of insulin-responsive glucose transport. In Homo sapiens (Human), this protein is Cyclin-dependent kinase 14 (CDK14).